A 161-amino-acid chain; its full sequence is Dihydrofolate reductase (161 aa).

A DHFR domain is found at 2-157 (TLSIIVAHDK…IPHTFLHLVR (156 aa)). 6-8 (IVA) is a substrate binding site. NADP(+) is bound by residues 7 to 8 (VA) and 15 to 20 (IGYQNQ). Asp28 is a substrate binding site. 44 to 47 (GRKT) provides a ligand contact to NADP(+). Arg58 is a substrate binding site. Residues 63-66 (LTNQ) and 93-98 (FGGQTL) each bind NADP(+). A substrate-binding site is contributed by Thr112.

The protein belongs to the dihydrofolate reductase family.

It carries out the reaction (6S)-5,6,7,8-tetrahydrofolate + NADP(+) = 7,8-dihydrofolate + NADPH + H(+). It functions in the pathway cofactor biosynthesis; tetrahydrofolate biosynthesis; 5,6,7,8-tetrahydrofolate from 7,8-dihydrofolate: step 1/1. In terms of biological role, key enzyme in folate metabolism. Catalyzes an essential reaction for de novo glycine and purine synthesis, and for DNA precursor synthesis. In Staphylococcus epidermidis, this protein is Dihydrofolate reductase (folA).